The chain runs to 125 residues: UPF0102 protein mlr4633 (125 aa).

The protein belongs to the UPF0102 family.

This is UPF0102 protein mlr4633 from Mesorhizobium japonicum (strain LMG 29417 / CECT 9101 / MAFF 303099) (Mesorhizobium loti (strain MAFF 303099)).